The primary structure comprises 301 residues: Glycine--tRNA ligase alpha subunit (301 aa).

This sequence belongs to the class-II aminoacyl-tRNA synthetase family. In terms of assembly, tetramer of two alpha and two beta subunits.

It is found in the cytoplasm. It carries out the reaction tRNA(Gly) + glycine + ATP = glycyl-tRNA(Gly) + AMP + diphosphate. This chain is Glycine--tRNA ligase alpha subunit, found in Shewanella frigidimarina (strain NCIMB 400).